The sequence spans 670 residues: Probable potassium transport system protein Kup (670 aa).

The tract at residues 1 to 42 (MSQIPSPNDPPPAGAVPTSGAPAGPSATPAPSPTAGFSLPEH) is disordered. The span at 15 to 35 (AVPTSGAPAGPSATPAPSPTA) shows a compositional bias: low complexity. Helical transmembrane passes span 51–71 (LAALAVGALGVVYGDIGTSPL), 91–111 (VLGVLSLVFWAMTFVVTFKYM), 144–164 (VLLMLGLFGAALLYGDGIITP), 180–200 (PAMERVVVPATVVILVFLFLF), 208–228 (VGAVFGPIMLVWFATIAVLGV), 254–274 (GWHGFLVLGGVVLVITGGEAL), 290–310 (WLGLAMPALLLNYLGQGALLL), 322–342 (LLAPEWALYPTIAIATAAAIV), 380–400 (IYLPEVNWMLGTACVALVLGF), 406–426 (LASAYGIAVTGTMIVTTLLFH), 440–460 (AWPLTVLFLTVDASFFLANVV), and 464–484 (DGGWFPIAAAALVFTLMSTWK).

This sequence belongs to the HAK/KUP transporter (TC 2.A.72) family.

The protein localises to the cell inner membrane. It catalyses the reaction K(+)(in) + H(+)(in) = K(+)(out) + H(+)(out). Its function is as follows. Transport of potassium into the cell. Likely operates as a K(+):H(+) symporter. This chain is Probable potassium transport system protein Kup, found in Anaeromyxobacter dehalogenans (strain 2CP-C).